The chain runs to 361 residues: Protein RecA (361 aa).

Gly68–Thr75 contributes to the ATP binding site. The segment at Pro342–Glu361 is disordered. A compositionally biased stretch (basic and acidic residues) spans Gly344–Glu361.

It belongs to the RecA family.

It is found in the cytoplasm. Functionally, can catalyze the hydrolysis of ATP in the presence of single-stranded DNA, the ATP-dependent uptake of single-stranded DNA by duplex DNA, and the ATP-dependent hybridization of homologous single-stranded DNAs. It interacts with LexA causing its activation and leading to its autocatalytic cleavage. This is Protein RecA from Clostridium beijerinckii (strain ATCC 51743 / NCIMB 8052) (Clostridium acetobutylicum).